The primary structure comprises 281 residues: Large ribosomal subunit protein mL46 (281 aa).

A mitochondrion-targeting transit peptide spans 1–19 (MKVNLMLKRGLATATATAS). Over residues 106–118 (RERSTKQEVKLSD) the composition is skewed to basic and acidic residues. The disordered stretch occupies residues 106 to 141 (RERSTKQEVKLSDDSTVAFSNNQKEQSKDDVNRPVI). Residues 119-129 (DSTVAFSNNQK) show a composition bias toward polar residues.

The protein belongs to the mitochondrion-specific ribosomal protein mL46 family. In terms of assembly, component of the mitochondrial large ribosomal subunit (mt-LSU). Mature yeast 74S mitochondrial ribosomes consist of a small (37S) and a large (54S) subunit. The 37S small subunit contains a 15S ribosomal RNA (15S mt-rRNA) and 34 different proteins. The 54S large subunit contains a 21S rRNA (21S mt-rRNA) and 46 different proteins.

Its subcellular location is the mitochondrion. Functionally, component of the mitochondrial ribosome (mitoribosome), a dedicated translation machinery responsible for the synthesis of mitochondrial genome-encoded proteins, including at least some of the essential transmembrane subunits of the mitochondrial respiratory chain. The mitoribosomes are attached to the mitochondrial inner membrane and translation products are cotranslationally integrated into the membrane. This Saccharomyces cerevisiae (strain ATCC 204508 / S288c) (Baker's yeast) protein is Large ribosomal subunit protein mL46 (MRPL17).